We begin with the raw amino-acid sequence, 406 residues long: Cysteine desulfurase (406 aa).

At K226 the chain carries N6-(pyridoxal phosphate)lysine. C364 acts as the Cysteine persulfide intermediate in catalysis.

Belongs to the class-V pyridoxal-phosphate-dependent aminotransferase family. Csd subfamily. Homodimer. Interacts with SufE and the SufBCD complex composed of SufB, SufC and SufD. The interaction with SufE is required to mediate the direct transfer of the sulfur atom from the S-sulfanylcysteine. It depends on pyridoxal 5'-phosphate as a cofactor.

It is found in the cytoplasm. It catalyses the reaction (sulfur carrier)-H + L-cysteine = (sulfur carrier)-SH + L-alanine. It carries out the reaction L-selenocysteine + AH2 = hydrogenselenide + L-alanine + A + H(+). It functions in the pathway cofactor biosynthesis; iron-sulfur cluster biosynthesis. Functionally, cysteine desulfurases mobilize the sulfur from L-cysteine to yield L-alanine, an essential step in sulfur metabolism for biosynthesis of a variety of sulfur-containing biomolecules. Component of the suf operon, which is activated and required under specific conditions such as oxidative stress and iron limitation. Acts as a potent selenocysteine lyase in vitro, that mobilizes selenium from L-selenocysteine. Selenocysteine lyase activity is however unsure in vivo. This chain is Cysteine desulfurase, found in Yersinia pseudotuberculosis serotype IB (strain PB1/+).